We begin with the raw amino-acid sequence, 1441 residues long: Remodeling and spacing factor 1 (1441 aa).

Positions 17–84 constitute a DDT domain; the sequence is PGSCPNFAVV…MRKIGKSVTA (68 aa). Glycyl lysine isopeptide (Lys-Gly) (interchain with G-Cter in SUMO2) cross-links involve residues K136 and K215. Over residues 215 to 227 the composition is skewed to polar residues; it reads KNSSQQDNSSRES. A disordered region spans residues 215-283; that stretch reads KNSSQQDNSS…TTVKKEKEDE (69 aa). Position 227 is a phosphoserine (S227). Composition is skewed to basic and acidic residues over residues 234-257 and 274-283; these read ETKKEEETPKQEEQKESEKMKSEE and TTVKKEKEDE. Residues K236, K243, K248, K252, and K254 each participate in a glycyl lysine isopeptide (Lys-Gly) (interchain with G-Cter in SUMO2) cross-link. A Glycyl lysine isopeptide (Lys-Gly) (interchain with G-Cter in SUMO1); alternate cross-link involves residue K277. A Glycyl lysine isopeptide (Lys-Gly) (interchain with G-Cter in SUMO2); alternate cross-link involves residue K277. Glycyl lysine isopeptide (Lys-Gly) (interchain with G-Cter in SUMO2) cross-links involve residues K284, K288, K294, K305, K306, K309, K323, K327, K337, K342, K358, K373, K381, and K390. Positions 330-340 are enriched in basic and acidic residues; the sequence is RADPKDTKSSM. The segment at 330-385 is disordered; sequence RADPKDTKSSMEKPVAQEPERIEFGGNIKSSHEITEKSTEETEKLKNDQQAKIPLK. A compositionally biased stretch (basic and acidic residues) spans 359-378; the sequence is SSHEITEKSTEETEKLKNDQ. A phosphoserine mark is found at S392 and S397. Residues K400, K405, K415, and K419 each participate in a glycyl lysine isopeptide (Lys-Gly) (interchain with G-Cter in SUMO2) cross-link. A Phosphoserine modification is found at S429. K439 participates in a covalent cross-link: Glycyl lysine isopeptide (Lys-Gly) (interchain with G-Cter in SUMO2). K456 participates in a covalent cross-link: Glycyl lysine isopeptide (Lys-Gly) (interchain with G-Cter in SUMO1); alternate. K456 is covalently cross-linked (Glycyl lysine isopeptide (Lys-Gly) (interchain with G-Cter in SUMO2); alternate). Glycyl lysine isopeptide (Lys-Gly) (interchain with G-Cter in SUMO2) cross-links involve residues K463 and K468. Positions 467 to 480 are enriched in basic and acidic residues; that stretch reads TKEESYSPSKDRNI. Positions 467–634 are disordered; the sequence is TKEESYSPSK…AAETSPPSNI (168 aa). S473 is modified (phosphoserine). Positions 482–498 are enriched in polar residues; the sequence is TEGNGTESLNSVITSMK. K498 is covalently cross-linked (Glycyl lysine isopeptide (Lys-Gly) (interchain with G-Cter in SUMO2)). Residues 500–514 are compositionally biased toward basic and acidic residues; it reads GELEKETAPLRKDAD. At S524 the chain carries Phosphoserine. Polar residues predominate over residues 552–562; sequence SKTALSSTESC. K565 is covalently cross-linked (Glycyl lysine isopeptide (Lys-Gly) (interchain with G-Cter in SUMO2)). A compositionally biased stretch (basic and acidic residues) spans 565-601; sequence KGEEKSPKTKKDKRPPILECLEKLEKSKKTFLDKDAQ. A phosphoserine mark is found at S570 and S604. The segment covering 609 to 621 has biased composition (basic and acidic residues); that stretch reads EVPKSTLESEKPG. S622 bears the Phosphoserine mark. The residue at position 628 (T628) is a Phosphothreonine. At S629 the chain carries Phosphoserine. Residues K662, K663, K670, K677, K698, and K709 each participate in a glycyl lysine isopeptide (Lys-Gly) (interchain with G-Cter in SUMO2) cross-link. The disordered stretch occupies residues 675 to 887; that stretch reads FTKVEMDNLD…EEKESEEAIL (213 aa). The residue at position 748 (S748) is a Phosphoserine. Basic and acidic residues-rich tracts occupy residues 753–770, 789–802, and 816–831; these read LEPENKQEKTEKEEEKTN, AEIRDQKADKKRGE, and KTDKKEILKKSEKDTN. Residues K758, K768, K795, and K799 each participate in a glycyl lysine isopeptide (Lys-Gly) (interchain with G-Cter in SUMO2) cross-link. The span at 864–873 shows a compositional bias: low complexity; that stretch reads GSGSEKSSAA. Acidic residues predominate over residues 874–887; that stretch reads SEEEEEKESEEAIL. At S882 the chain carries Phosphoserine. The segment at 891–941 adopts a PHD-type zinc-finger fold; that stretch reads DEPCKKCGLPNHPELILLCDSCDSGYHTACLRPPLMIIPDGEWFCPPCQHK. A coiled-coil region spans residues 942 to 1012; that stretch reads LLCEKLEEQL…SKANLLERRS (71 aa). The segment at 983 to 1007 is disordered; it reads PPQEPDFSEDQEEKKKDSKKSKANL. A Glycyl lysine isopeptide (Lys-Gly) (interchain with G-Cter in SUMO2) cross-link involves residue K1039. Residue K1050 is modified to N6-acetyllysine. The interval 1063-1428 is disordered; the sequence is ISTILDEERK…EEEEDELLRV (366 aa). 2 stretches are compositionally biased toward acidic residues: residues 1094–1107 and 1120–1141; these read LDSDSNLDEEESED and VVSDENPDESEEDPPSNDDSDT. Residues S1096, S1098, and S1105 each carry the phosphoserine modification. Positions 1146–1169 are enriched in basic residues; sequence RRLRRHPSRPMRQSRRLRRKTPKK. Acidic residues predominate over residues 1189 to 1199; sequence SDFSDDFSDDF. Over residues 1203–1212 the composition is skewed to basic residues; the sequence is RRRRSRRNQK. S1221, S1223, and S1226 each carry phosphoserine. The span at 1229 to 1244 shows a compositional bias: basic residues; sequence SLRRGKEIRRVHKRRL. A phosphoserine mark is found at S1258 and S1277. T1278 is subject to Phosphothreonine. The segment covering 1280-1292 has biased composition (acidic residues); the sequence is EYSEADEEEEEEE. At T1305 the chain carries Phosphothreonine. S1325 and S1336 each carry phosphoserine. Residues 1335 to 1344 are compositionally biased toward basic and acidic residues; it reads ESTKKPYRIE. The residue at position 1339 (K1339) is an N6-acetyllysine. 3 positions are modified to phosphoserine: S1345, S1359, and S1375. The span at 1394–1408 shows a compositional bias: polar residues; it reads PKDNSTASASLASNG.

In terms of assembly, component of the RSF-1 ISWI chromatin-remodeling complex at least composed of SMARCA1 and RSF1. Within the RSF-1 ISWI chromatin-remodeling complex interacts with SMARCA1. Component of the RSF-5 ISWI chromatin-remodeling complex (also called the RSF complex) at least composed of SMARCA5/SNF2H and RSF1. Within the RSF-5 ISWI chromatin-remodeling complex interacts with SMARCA5/SNF2H; the interaction is direct. Identified in a centromere complex containing histones H2A, H2B and H4, and at least CENPA, CENPB, CENPC, CENPT, CENPN, HJURP, SUPT16H, SSRP1 and RSF1. Also binds the HBV pX/HBx protein, which is required to activate transcription of the viral genome. Post-translationally, phosphorylated. Ubiquitously expressed. Highly expressed in the heart, skeletal muscle, kidney and placenta. Expressed at low levels in the brain and colon.

The protein localises to the nucleus. Functionally, regulatory subunit of the ATP-dependent RSF-1 and RSF-5 ISWI chromatin-remodeling complexes, which form ordered nucleosome arrays on chromatin and facilitate access to DNA during DNA-templated processes such as DNA replication, transcription, and repair. Binds to core histones together with SMARCA5, and is required for the assembly of regular nucleosome arrays by the RSF-5 ISWI chromatin-remodeling complex. Directly stimulates the ATPase activity of SMARCA1 and SMARCA5 in the RSF-1 and RSF-5 ISWI chromatin-remodeling complexes, respectively. The RSF-1 ISWI chromatin remodeling complex has a lower ATP hydrolysis rate than the RSF-5 ISWI chromatin-remodeling complex. The complexes do not have the ability to slide mononucleosomes to the center of a DNA template. Facilitates transcription of hepatitis B virus (HBV) genes by the pX transcription activator. In case of infection by HBV, together with pX, it represses TNF-alpha induced NF-kappa-B transcription activation. Represses transcription when artificially recruited to chromatin by fusion to a heterogeneous DNA binding domain. This chain is Remodeling and spacing factor 1 (RSF1), found in Homo sapiens (Human).